Reading from the N-terminus, the 414-residue chain is Multifunctional CCA protein (414 aa).

ATP contacts are provided by Gly-8 and Arg-11. CTP is bound by residues Gly-8 and Arg-11. Positions 21 and 23 each coordinate Mg(2+). ATP-binding residues include Arg-91, Arg-137, and Arg-140. CTP-binding residues include Arg-91, Arg-137, and Arg-140. The region spanning 228-329 (TGIHTMMTVA…LKLFDAIDVW (102 aa)) is the HD domain.

Belongs to the tRNA nucleotidyltransferase/poly(A) polymerase family. Bacterial CCA-adding enzyme type 1 subfamily. As to quaternary structure, monomer. Can also form homodimers and oligomers. Mg(2+) is required as a cofactor. Requires Ni(2+) as cofactor.

The catalysed reaction is a tRNA precursor + 2 CTP + ATP = a tRNA with a 3' CCA end + 3 diphosphate. It carries out the reaction a tRNA with a 3' CCA end + 2 CTP + ATP = a tRNA with a 3' CCACCA end + 3 diphosphate. Functionally, catalyzes the addition and repair of the essential 3'-terminal CCA sequence in tRNAs without using a nucleic acid template. Adds these three nucleotides in the order of C, C, and A to the tRNA nucleotide-73, using CTP and ATP as substrates and producing inorganic pyrophosphate. tRNA 3'-terminal CCA addition is required both for tRNA processing and repair. Also involved in tRNA surveillance by mediating tandem CCA addition to generate a CCACCA at the 3' terminus of unstable tRNAs. While stable tRNAs receive only 3'-terminal CCA, unstable tRNAs are marked with CCACCA and rapidly degraded. The chain is Multifunctional CCA protein from Pectobacterium atrosepticum (strain SCRI 1043 / ATCC BAA-672) (Erwinia carotovora subsp. atroseptica).